The primary structure comprises 195 residues: 22.0 kDa heat shock protein (195 aa).

The N-terminal stretch at 1 to 21 (MMKHLLSIFFIGALLLGNIKT) is a signal peptide. The 119-residue stretch at 62–180 (RDTSVALSPA…GPRVVNIAAE (119 aa)) folds into the sHSP domain. N-linked (GlcNAc...) asparagine glycosylation is present at asparagine 160.

Belongs to the small heat shock protein (HSP20) family. In terms of assembly, may form oligomeric structures.

It localises to the endoplasmic reticulum. The polypeptide is 22.0 kDa heat shock protein (HSP22.0) (Arabidopsis thaliana (Mouse-ear cress)).